The following is a 661-amino-acid chain: MSRKSIVQIRRSEVKRKRSSTASSTSEGKTLHKNTHTSSKRQRTLTEFNIPTSSNLPVRSSSYSFSRFSCSTSNKNTEPVIINDDDHNSICLEDTAKVEITIDTDEEELVSLHDNEVSAIENRTEDRIVTELEEQVNVKVSTEVIQCPICLENLSHLELYERETHCDTCIGSDPSNMGTPKKNIRSFISNPSSPAKTKRDIATSKKPTRVKLVLPSFKIIKFNNGHEIVVDGFNYKASETISQYFLSHFHSDHYIGLKKSWNNPDENPIKKTLYCSKITAILVNLKFKIPMDEIQILPMNKRFWITDTISVVTLDANHCPGAIIMLFQEFLANSYDKPIRQILHTGDFRSNAKMIETIQKWLAETANETIDQVYLDTTYMTMGYNFPSQHSVCETVADFTLRLIKHGKNKTFGDSQRNLFHFQRKKTLTTHRYRVLFLVGTYTIGKEKLAIKICEFLKTKLFVMPNSVKFSMMLTVLQNNENQNDMWDESLLTSNLHESSVHLVPIRVLKSQETIEAYLKSLKELETDYVKDIEDVVGFIPTGWSHNFGLKYQKKNDDDENEMSGNTEYCLELMKNDRDNDDENGFEISSILRQYKKYNKFQVFNVPYSEHSSFNDLVKFGCKLKCSEVIPTVNLNNLWKVRYMTNWFQCWENVRKTRAAK.

Positions 1 to 44 (MSRKSIVQIRRSEVKRKRSSTASSTSEGKTLHKNTHTSSKRQRT) are disordered. The segment covering 31 to 43 (LHKNTHTSSKRQR) has biased composition (basic residues). The segment at 144 to 174 (VIQCPICLENLSHLELYERETHCDTCIGSDP) adopts a UBZ4-type zinc-finger fold. The Zn(2+) site is built by C147, C150, H165, and C169.

It belongs to the DNA repair metallo-beta-lactamase (DRMBL) family.

It is found in the nucleus. Functionally, required for DNA interstrand cross-link repair. This requires cleavage of cross-linked DNA to generate DNA double strand breaks (DSBs). This protein has 5' exonuclease activity on single-stranded and double-stranded DNA, which appears to be necessary for the processing of DNA double strand breaks prior to ligation. The polypeptide is DNA cross-link repair protein PSO2/SNM1 (PSO2) (Saccharomyces cerevisiae (strain ATCC 204508 / S288c) (Baker's yeast)).